The chain runs to 587 residues: Beta-(1--&gt;2)glucan export ATP-binding/permease protein NdvA (587 aa).

In terms of domain architecture, ABC transmembrane type-1 spans 21-301 (VSLVVVANIV…MRQFATQIFE (281 aa)). 6 helical membrane-spanning segments follow: residues 23-43 (LVVV…ILFG), 57-77 (PILF…VLVA), 128-148 (GLWL…ALLI), 158-178 (LSAV…VVMS), 248-268 (MAST…VQAG), and 272-292 (VGDV…LDLM). An ABC transporter domain is found at 335 to 569 (IEFRDVSFGF…NGRFAALLRA (235 aa)). 368–375 (GPTGAGKT) contacts ATP.

It belongs to the ABC transporter superfamily. Beta-(1--&gt;2)glucan exporter (TC 3.A.1.108.1) family. As to quaternary structure, homodimer.

Its subcellular location is the cell inner membrane. The catalysed reaction is [(1-&gt;2)-beta-D-glucosyl](n)(in) + ATP + H2O = [(1-&gt;2)-beta-D-glucosyl](n)(out) + ADP + phosphate + H(+). Its function is as follows. Involved in beta-(1--&gt;2)glucan export. Transmembrane domains (TMD) form a pore in the inner membrane and the ATP-binding domain (NBD) is responsible for energy generation. The chain is Beta-(1--&gt;2)glucan export ATP-binding/permease protein NdvA from Rhizobium johnstonii (strain DSM 114642 / LMG 32736 / 3841) (Rhizobium leguminosarum bv. viciae).